We begin with the raw amino-acid sequence, 273 residues long: NAD(P)H-hydrate epimerase (273 aa).

Residues 18-257 (ALKLDEDLIN…LLAMEYDVQE (240 aa)) form the YjeF N-terminal domain. 71–75 (NNGGD) is a binding site for (6S)-NADPHX. Residues Asn-72 and Asp-146 each contribute to the K(+) site. (6S)-NADPHX-binding positions include 150-157 (GFSFHGGP), Tyr-162, and Asp-188. A K(+)-binding site is contributed by Ser-191.

The protein belongs to the NnrE/AIBP family. The cofactor is K(+).

It carries out the reaction (6R)-NADHX = (6S)-NADHX. The enzyme catalyses (6R)-NADPHX = (6S)-NADPHX. In terms of biological role, catalyzes the epimerization of the S- and R-forms of NAD(P)HX, a damaged form of NAD(P)H that is a result of enzymatic or heat-dependent hydration. This is a prerequisite for the S-specific NAD(P)H-hydrate dehydratase to allow the repair of both epimers of NAD(P)HX. The sequence is that of NAD(P)H-hydrate epimerase from Giardia intestinalis (strain ATCC 50803 / WB clone C6) (Giardia lamblia).